The primary structure comprises 461 residues: MALAIYNTLSKAKEPFRPLEGNKVRMYVCGMTVYDFCHIGHARVMVAFDVVTRWLRHRGYDVTYVRNITDIDDKIIRRASENGEPFQALVERMIAAMHEDETRLNVLRPDVEPRATDHIAGMHTMIQTLIDKGFAYAPGNGDVYYRVGKFVGYGKLSRRKIEDLKIGARIEVDEAKEDPLDFVLWKGAKPGEPSWDSPWGPGRPGWHIECSVMSTCCLGETFDIHGGGPDLVFPHHENEIAQSEAATGKLYANAWMHAGAVRVDGEKMSKSLGNFFTIREVLEKYHPEVVRYLLVSSHYRSPINYSEDSLREAKSALERFYNGLKGLPEAQPAGGDEFVARFAAAMDDDFNSPEACAVLFEMIREVNRLREADLAAAAALAARLKVLAGVLGVLQLEPDAFLQAGAAGKVDAAEVEALIAARLAARAEKNWGESDRIRDQLTAMGVVLEDGKGGTTWRLAE.

Cys29 is a Zn(2+) binding site. Positions 31-41 (MTVYDFCHIGH) match the 'HIGH' region motif. 3 residues coordinate Zn(2+): Cys210, His235, and Glu239. Positions 267 to 271 (KMSKS) match the 'KMSKS' region motif. ATP is bound at residue Lys270.

The protein belongs to the class-I aminoacyl-tRNA synthetase family. In terms of assembly, monomer. The cofactor is Zn(2+).

It is found in the cytoplasm. The enzyme catalyses tRNA(Cys) + L-cysteine + ATP = L-cysteinyl-tRNA(Cys) + AMP + diphosphate. The sequence is that of Cysteine--tRNA ligase from Stutzerimonas stutzeri (strain A1501) (Pseudomonas stutzeri).